The following is a 460-amino-acid chain: ATP synthase subunit beta (460 aa).

150–157 contacts ATP; sequence GGAGVGKT.

This sequence belongs to the ATPase alpha/beta chains family. In terms of assembly, F-type ATPases have 2 components, CF(1) - the catalytic core - and CF(0) - the membrane proton channel. CF(1) has five subunits: alpha(3), beta(3), gamma(1), delta(1), epsilon(1). CF(0) has three main subunits: a(1), b(2) and c(9-12). The alpha and beta chains form an alternating ring which encloses part of the gamma chain. CF(1) is attached to CF(0) by a central stalk formed by the gamma and epsilon chains, while a peripheral stalk is formed by the delta and b chains.

The protein resides in the cell inner membrane. The catalysed reaction is ATP + H2O + 4 H(+)(in) = ADP + phosphate + 5 H(+)(out). Its function is as follows. Produces ATP from ADP in the presence of a proton gradient across the membrane. The catalytic sites are hosted primarily by the beta subunits. This is ATP synthase subunit beta from Proteus mirabilis (strain HI4320).